Reading from the N-terminus, the 251-residue chain is Ubiquinone/menaquinone biosynthesis C-methyltransferase UbiE (251 aa).

S-adenosyl-L-methionine contacts are provided by residues Thr-74, Asp-95, and 123–124 (NA).

It belongs to the class I-like SAM-binding methyltransferase superfamily. MenG/UbiE family.

The enzyme catalyses a 2-demethylmenaquinol + S-adenosyl-L-methionine = a menaquinol + S-adenosyl-L-homocysteine + H(+). The catalysed reaction is a 2-methoxy-6-(all-trans-polyprenyl)benzene-1,4-diol + S-adenosyl-L-methionine = a 5-methoxy-2-methyl-3-(all-trans-polyprenyl)benzene-1,4-diol + S-adenosyl-L-homocysteine + H(+). It functions in the pathway quinol/quinone metabolism; menaquinone biosynthesis; menaquinol from 1,4-dihydroxy-2-naphthoate: step 2/2. Its pathway is cofactor biosynthesis; ubiquinone biosynthesis. In terms of biological role, methyltransferase required for the conversion of demethylmenaquinol (DMKH2) to menaquinol (MKH2) and the conversion of 2-polyprenyl-6-methoxy-1,4-benzoquinol (DDMQH2) to 2-polyprenyl-3-methyl-6-methoxy-1,4-benzoquinol (DMQH2). The sequence is that of Ubiquinone/menaquinone biosynthesis C-methyltransferase UbiE from Shewanella putrefaciens (strain CN-32 / ATCC BAA-453).